Here is an 810-residue protein sequence, read N- to C-terminus: Lon protease (810 aa).

Residues 16–209 (YPVPPLRDIV…RVYAFMEGEI (194 aa)) enclose the Lon N-terminal domain. Residue 361–368 (GPPGVGKT) coordinates ATP. The region spanning 598 to 779 (EDLVGVTTGL…DDVLKHALVR (182 aa)) is the Lon proteolytic domain. Residues serine 685 and lysine 728 contribute to the active site.

This sequence belongs to the peptidase S16 family. In terms of assembly, homohexamer. Organized in a ring with a central cavity.

Its subcellular location is the cytoplasm. The catalysed reaction is Hydrolysis of proteins in presence of ATP.. Its function is as follows. ATP-dependent serine protease that mediates the selective degradation of mutant and abnormal proteins as well as certain short-lived regulatory proteins. Required for cellular homeostasis and for survival from DNA damage and developmental changes induced by stress. Degrades polypeptides processively to yield small peptide fragments that are 5 to 10 amino acids long. Binds to DNA in a double-stranded, site-specific manner. Involved in iron uptake. This chain is Lon protease, found in Azospirillum brasilense.